The following is a 417-amino-acid chain: Solanesyl diphosphate synthase 2, chloroplastic (417 aa).

A chloroplast-targeting transit peptide spans 1 to 60; the sequence is MMMSCRNIDLGTSVLDHSCSSSSTSRRFLFGNSSKTVCMIGGRSCVGNLVFLRRDLATCR. Residues Lys137, Arg140, and His175 each contribute to the isopentenyl diphosphate site. Residues Asp182 and Asp186 each coordinate Mg(2+). Arg191 lines the an all-trans-polyprenyl diphosphate pocket. Arg192 contributes to the isopentenyl diphosphate binding site. Residues Lys268, Thr269, Gln306, and Lys323 each coordinate an all-trans-polyprenyl diphosphate.

This sequence belongs to the FPP/GGPP synthase family. Homodimer. Interacts with FBN5. Mg(2+) is required as a cofactor. Higher expression in leaves than in roots.

Its subcellular location is the plastid. It localises to the chloroplast. It carries out the reaction 5 isopentenyl diphosphate + (2E,6E,10E)-geranylgeranyl diphosphate = all-trans-nonaprenyl diphosphate + 5 diphosphate. In terms of biological role, involved in providing solanesyl diphosphate for plastoquinone-9 (PQ-9) formation in plastids. Catalyzes the elongation of the prenyl side chain of PQ-9 in plastids. Contributes to the biosynthesis of plastochromanol-8 (PC-8) in plastids. Does not contribute to the synthesis of tocopherol or ubiquinone. PQ-9 and PC-8 are lipophilic antioxidants that act as protectant against photooxidative stress under high light stress conditions. Prefers geranylgeranyl diphosphate to farnesyl diphosphate as substrate. No activity with geranyl diphosphate or dimethylallyl diphosphate as substrate. The polypeptide is Solanesyl diphosphate synthase 2, chloroplastic (Arabidopsis thaliana (Mouse-ear cress)).